Reading from the N-terminus, the 381-residue chain is Pre-mRNA-splicing factor cwf28 (381 aa).

Residues 1-21 are disordered; it reads MKRKAVLEAFSDSEDEDEKKL. Phosphoserine occurs at positions 11 and 13. The stretch at 104-157 forms a coiled coil; it reads AADNEIVDWKANNSNEKAQNKIATNKESTDILPEEVQLVLNDLNDDVKSANSAN. The tract at residues 262 to 381 is disordered; it reads LNSQNEHTEV…DRSYRSTRTL (120 aa). The segment covering 274–285 has biased composition (polar residues); sequence KSNSIDNLTPSS. A phosphoserine mark is found at Ser-275 and Ser-277. Basic and acidic residues-rich tracts occupy residues 287–297, 306–332, and 362–375; these read LFRKRSRDNNL, KHLDYNSRNYNKRDRDPDRTKYREYHS, and SDRYTERENPDRSY.

It belongs to the SPP2 family. In terms of assembly, belongs to the 40S cdc5-associated complex (or cwf complex), a spliceosome sub-complex reminiscent of a late-stage spliceosome composed of the U2, U5 and U6 snRNAs and at least brr2, cdc5, cwf2/prp3, cwf3/syf1, cwf4/syf3, cwf5/ecm2, spp42/cwf6, cwf7/spf27, cwf8, cwf9, cwf10, cwf11, cwf12, prp45/cwf13, cwf14, cwf15, cwf16, cwf17, cwf18, cwf19, cwf20, cwf21, cwf22, cwf23, cwf24, cwf25, cwf26, cyp7/cwf27, cwf28, cwf29/ist3, lea1, msl1, prp5/cwf1, prp10, prp12/sap130, prp17, prp22, sap61, sap62, sap114, sap145, slu7, smb1, smd1, smd3, smf1, smg1 and syf2.

It is found in the nucleus. Functionally, involved in spliceosome maturation and the first step of pre-mRNA splicing. This is Pre-mRNA-splicing factor cwf28 (cwf28) from Schizosaccharomyces pombe (strain 972 / ATCC 24843) (Fission yeast).